The primary structure comprises 265 residues: 4-hydroxy-tetrahydrodipicolinate reductase (265 aa).

Residues 7 to 12 (GASGRM) and D33 contribute to the NAD(+) site. R34 is a binding site for NADP(+). Residues 96–98 (GTT) and 120–123 (AANM) each bind NAD(+). H153 acts as the Proton donor/acceptor in catalysis. Position 154 (H154) interacts with (S)-2,3,4,5-tetrahydrodipicolinate. K157 serves as the catalytic Proton donor. 163–164 (GT) is a (S)-2,3,4,5-tetrahydrodipicolinate binding site.

Belongs to the DapB family.

It is found in the cytoplasm. It catalyses the reaction (S)-2,3,4,5-tetrahydrodipicolinate + NAD(+) + H2O = (2S,4S)-4-hydroxy-2,3,4,5-tetrahydrodipicolinate + NADH + H(+). The catalysed reaction is (S)-2,3,4,5-tetrahydrodipicolinate + NADP(+) + H2O = (2S,4S)-4-hydroxy-2,3,4,5-tetrahydrodipicolinate + NADPH + H(+). It functions in the pathway amino-acid biosynthesis; L-lysine biosynthesis via DAP pathway; (S)-tetrahydrodipicolinate from L-aspartate: step 4/4. Its function is as follows. Catalyzes the conversion of 4-hydroxy-tetrahydrodipicolinate (HTPA) to tetrahydrodipicolinate. The polypeptide is 4-hydroxy-tetrahydrodipicolinate reductase (Burkholderia ambifaria (strain ATCC BAA-244 / DSM 16087 / CCUG 44356 / LMG 19182 / AMMD) (Burkholderia cepacia (strain AMMD))).